We begin with the raw amino-acid sequence, 293 residues long: Biphenyl-2,3-diol 1,2-dioxygenase (293 aa).

VOC domains lie at 5 to 119 and 143 to 265; these read RLGY…IYYG and GIGH…FGWG. His-146, His-210, and Glu-261 together coordinate Fe cation.

It belongs to the extradiol ring-cleavage dioxygenase family. Homooctamer. Requires Fe(2+) as cofactor.

It catalyses the reaction biphenyl-2,3-diol + O2 = 2-hydroxy-6-oxo-6-phenylhexa-2,4-dienoate + H(+). Its pathway is xenobiotic degradation; biphenyl degradation; 2-hydroxy-2,4-pentadienoate and benzoate from biphenyl: step 3/4. The chain is Biphenyl-2,3-diol 1,2-dioxygenase (bphC) from Pseudomonas sp. (strain KKS102).